Reading from the N-terminus, the 38-residue chain is Spheniscin-2 (38 aa).

Disulfide bonds link Cys-5/Cys-33, Cys-12/Cys-27, and Cys-17/Cys-34.

In terms of assembly, monomer. In terms of tissue distribution, secreted into the stomach cavity.

The protein localises to the secreted. Its function is as follows. Has antifungal activity and antibacterial activity against Gram-positive and Gram-negative bacteria. Involved in the process of food preservation in the stomach during the incubation fast. May also be present during infection. In Aptenodytes patagonicus (King penguin), this protein is Spheniscin-2.